Consider the following 443-residue polypeptide: Porin D (443 aa).

Positions 1–23 are cleaved as a signal peptide; that stretch reads MKVMKWSAIALAVSAGSTQFAVA. Catalysis depends on residues His179, Asp231, and Ser319.

This sequence belongs to the outer membrane porin (Opr) (TC 1.B.25) family.

It is found in the cell outer membrane. Functionally, porin with a specificity for basic amino acids. Involved in facilitated diffusion of carbapenem beta-lactam antibiotics, such as imipenem and meropenem. Also possesses serine protease activity. In Pseudomonas aeruginosa (strain ATCC 15692 / DSM 22644 / CIP 104116 / JCM 14847 / LMG 12228 / 1C / PRS 101 / PAO1), this protein is Porin D (oprD).